Here is a 206-residue protein sequence, read N- to C-terminus: MRVVVPFGGRDPKTRLAPFFDADERREFAVSMLRDVLDAVRAVGGDPAVVADALVTVDAPVTVDDRPLTEVVGGELDDLGGGPVAVVMADLALATPAALSRLFETDADVVAAPGLGGGTNALVVRHPEFSVDYHGASILDHRRIARDAGCSFAEVDSMRLAVDVDEPSDLVEVLVHGEGRAREWLVDAGVRLARGSGRVEAVRERR.

The protein belongs to the CofC family. In terms of assembly, homodimer.

It carries out the reaction (2S)-2-phospholactate + GTP + H(+) = (2S)-lactyl-2-diphospho-5'-guanosine + diphosphate. The protein operates within cofactor biosynthesis; coenzyme F420 biosynthesis. In terms of biological role, guanylyltransferase that catalyzes the activation of (2S)-2-phospholactate (2-PL) as (2S)-lactyl-2-diphospho-5'-guanosine, via the condensation of 2-PL with GTP. It is involved in the biosynthesis of coenzyme F420, a hydride carrier cofactor. This chain is 2-phospho-L-lactate guanylyltransferase, found in Haloferax volcanii (strain ATCC 29605 / DSM 3757 / JCM 8879 / NBRC 14742 / NCIMB 2012 / VKM B-1768 / DS2) (Halobacterium volcanii).